A 508-amino-acid polypeptide reads, in one-letter code: Protein ultraspiracle (508 aa).

Positions 1 to 103 are modulating; it reads MDNCDQDASF…NHPLSGSKHL (103 aa). Disordered regions lie at residues 21–40 and 55–92; these read PDISQLNDSNNSSFSPKAES and PGSNSASSNNNSAGDAQMAQAPNSAGGSAAAAVQQQYP. Residues 24–35 are compositionally biased toward polar residues; the sequence is SQLNDSNNSSFS. Phosphoserine is present on Ser35. The span at 57–90 shows a compositional bias: low complexity; sequence SNSASSNNNSAGDAQMAQAPNSAGGSAAAAVQQQ. NR C4-type zinc fingers lie at residues 104 to 124 and 140 to 164; these read CSICGDRASGKHYGVYSCEGC and CRENRNCIIDKRQRNRCQYCRYQKC. Residues 104–169 constitute a DNA-binding region (nuclear receptor); sequence CSICGDRASG…RYQKCLTCGM (66 aa). The tract at residues 170–223 is hinge; it reads KREAVQEERQRGARNAAGRLSASGGGSSGPGSVGGSSSQGGGGGGGVSGGMGSG. The segment at 178-228 is disordered; that stretch reads RQRGARNAAGRLSASGGGSSGPGSVGGSSSQGGGGGGGVSGGMGSGNGSDD. Over residues 192–224 the composition is skewed to gly residues; that stretch reads SGGGSSGPGSVGGSSSQGGGGGGGVSGGMGSGN. In terms of domain architecture, NR LBD spans 239-498; the sequence is SIERIIEAEQ…ELFLEQLEAP (260 aa).

It belongs to the nuclear hormone receptor family. NR2 subfamily. In terms of assembly, heterodimer of USP and ECR. Only the heterodimer is capable of high-affinity binding to ecdysone.

It localises to the nucleus. In terms of biological role, receptor for ecdysone. May be an important modulator of insect metamorphosis. Plays an important part in embryonic and post-embryonic development. Binds to ecdysone response elements (ECRES) such as in the promoter region of s15 chorion gene. This chain is Protein ultraspiracle (usp), found in Drosophila melanogaster (Fruit fly).